Here is a 390-residue protein sequence, read N- to C-terminus: MSDLKTMMLNFGPQHPAAHGVLRLVLEMDGEIIERADPHIGLLHRGTEKLIEHKTYLQALPYFDRLDYVSPMSQEHAYSLCVEKLLQCEVPIRAKYLRVLFCELTRILNHLLNISSQALDVGAMTPLLWLFEEREKILEFYERASGARFHAAYIRPGGVAADVPEGLIEDIAKFIEQFPQYIDDVDELLTENRIWKQRTVGISEISIKQALDWGFSGPMLRAAGLAWDLRKSQPYEIYDQLDFDIPVGQNGDCYDRYLVRMEEIRQSVSLVKQCIEKIPEGPVKTEDRKISPPPRTEMKRSMEALIHHFKLYSEGYHVPEGEAYAAVEAPKGEFGVYIVSDGTNRPYRCRIRAPGFAHLQALDFMAKGHMLADVAAIIGSLDIVFGEIDR.

This sequence belongs to the complex I 49 kDa subunit family. NDH-1 is composed of 14 different subunits. Subunits NuoB, C, D, E, F, and G constitute the peripheral sector of the complex.

The protein resides in the cell membrane. It catalyses the reaction a quinone + NADH + 5 H(+)(in) = a quinol + NAD(+) + 4 H(+)(out). NDH-1 shuttles electrons from NADH, via FMN and iron-sulfur (Fe-S) centers, to quinones in the respiratory chain. The immediate electron acceptor for the enzyme in this species is believed to be ubiquinone. Couples the redox reaction to proton translocation (for every two electrons transferred, four hydrogen ions are translocated across the cytoplasmic membrane), and thus conserves the redox energy in a proton gradient. The chain is NADH-quinone oxidoreductase subunit D from Wolbachia sp. subsp. Brugia malayi (strain TRS).